The following is a 359-amino-acid chain: tRNA-specific 2-thiouridylase MnmA (359 aa).

Residues 6–13 (AMSGGVDS) and L32 each bind ATP. C101 (nucleophile) is an active-site residue. Residues C101 and C193 are joined by a disulfide bond. An ATP-binding site is contributed by G125. Positions 143–145 (KDQ) are interaction with tRNA. The active-site Cysteine persulfide intermediate is the C193.

This sequence belongs to the MnmA/TRMU family.

Its subcellular location is the cytoplasm. The catalysed reaction is S-sulfanyl-L-cysteinyl-[protein] + uridine(34) in tRNA + AH2 + ATP = 2-thiouridine(34) in tRNA + L-cysteinyl-[protein] + A + AMP + diphosphate + H(+). Catalyzes the 2-thiolation of uridine at the wobble position (U34) of tRNA, leading to the formation of s(2)U34. The protein is tRNA-specific 2-thiouridylase MnmA of Mycobacterium sp. (strain JLS).